The following is a 116-amino-acid chain: Probable transcriptional regulator WhiB6 (116 aa).

Residues cysteine 12, cysteine 53, cysteine 56, and cysteine 62 each coordinate [4Fe-4S] cluster. Positions 33-86 constitute a 4Fe-4S Wbl-type domain; the sequence is VCTQDPDRWTTTPDDEAKTLCRACPRRWLCARDAVESAGAEGLWAGVVIPESGR.

It belongs to the WhiB family. [4Fe-4S] cluster serves as cofactor. The Fe-S cluster can be nitrosylated by nitric oxide (NO). Post-translationally, upon Fe-S cluster removal intramolecular disulfide bonds are formed.

It is found in the cytoplasm. Functionally, acts as a transcriptional regulator. Probably redox-responsive. The apo- but not holo-form probably binds DNA. This Mycobacterium tuberculosis (strain CDC 1551 / Oshkosh) protein is Probable transcriptional regulator WhiB6 (whiB6).